The chain runs to 417 residues: Blood group Rh(CE) polypeptide (417 aa).

11 helical membrane-spanning segments follow: residues 12-32 (CLPLCALTLEAALILLFYFFT), 44-64 (LVASYQVGQDLTVMAALGLGF), 77-97 (VAFNLFMLALGVQWAILLDGF), 125-145 (ISAGAVLGKVNLAQLVVMVLV), 172-192 (FYVFAAYFGLTVAWCLPKPLP), 203-223 (TIPSLSAMLGALFLWMFWPSV), 238-258 (MFNTYYALAVSVVTAISGSSL), 265-285 (ISMTYVHSAVLAGGVAVGTSC), 287-307 (LIPSPWLAMVLGLVAGLISIG), 331-351 (IFSLLGLLGEITYIVLLVLHT), and 358-378 (MIGFQVLLSIGELSLAIVIAL).

The protein belongs to the ammonium transporter (TC 2.A.49) family. Rh subfamily. Heterotrimer; a RHCE monomer interacts with a RHAG homodimer. Component of the ankyrin-1 complex in the erythrocyte, composed of ANK1, RHCE, RHAG, SLC4A1, EPB42, GYPA, GYPB and AQP1. Interacts (via the N- and C-terminal) with ANK1 (via ANk 1-5 repeats); mediates the primary membrane attachment site for ANK1. In terms of tissue distribution, restricted to tissues or cell lines expressing erythroid characters. Isoform 4g and isoform RhPI-Alpha are expressed in immature erythroblasts but not in mature erythroblasts.

It localises to the membrane. In terms of biological role, component of the ankyrin-1 complex, a multiprotein complex involved in the stability and shape of the erythrocyte membrane. Mediates the primary membrane attachment site for ANK1 when associated with RHAG. May participate in the ammonium and carbon dioxide transport through the heterotrimer form. This Homo sapiens (Human) protein is Blood group Rh(CE) polypeptide.